A 426-amino-acid polypeptide reads, in one-letter code: Serine--tRNA ligase (426 aa).

The tract at residues 36–66 (KRKHLQERTQDLQSQRNTISKEIGQKKAKGE) is disordered. Polar residues predominate over residues 46–55 (DLQSQRNTIS). An L-serine-binding site is contributed by 233–235 (TAE). Residue 264–266 (RSE) participates in ATP binding. Glu-287 contacts L-serine. Position 351-354 (351-354 (EISS)) interacts with ATP. Ser-387 is an L-serine binding site.

The protein belongs to the class-II aminoacyl-tRNA synthetase family. Type-1 seryl-tRNA synthetase subfamily. As to quaternary structure, homodimer. The tRNA molecule binds across the dimer.

The protein localises to the cytoplasm. It catalyses the reaction tRNA(Ser) + L-serine + ATP = L-seryl-tRNA(Ser) + AMP + diphosphate + H(+). The enzyme catalyses tRNA(Sec) + L-serine + ATP = L-seryl-tRNA(Sec) + AMP + diphosphate + H(+). It participates in aminoacyl-tRNA biosynthesis; selenocysteinyl-tRNA(Sec) biosynthesis; L-seryl-tRNA(Sec) from L-serine and tRNA(Sec): step 1/1. Functionally, catalyzes the attachment of serine to tRNA(Ser). Is also able to aminoacylate tRNA(Sec) with serine, to form the misacylated tRNA L-seryl-tRNA(Sec), which will be further converted into selenocysteinyl-tRNA(Sec). The polypeptide is Serine--tRNA ligase (Francisella tularensis subsp. holarctica (strain FTNF002-00 / FTA)).